We begin with the raw amino-acid sequence, 438 residues long: 26S proteasome regulatory subunit 6A (438 aa).

The segment at 1 to 24 (MSTLEELDALDQSQQGGSSNNEGL) is disordered. Positions 11–22 (DQSQQGGSSNNE) are enriched in polar residues. 226-233 (GPPGTGKT) contributes to the ATP binding site.

This sequence belongs to the AAA ATPase family.

The protein resides in the cytoplasm. It localises to the nucleus. The 26S proteasome is involved in the ATP-dependent degradation of ubiquitinated proteins. The regulatory (or ATPase) complex confers ATP dependency and substrate specificity to the 26S complex. The sequence is that of 26S proteasome regulatory subunit 6A (tbp1) from Schizosaccharomyces pombe (strain 972 / ATCC 24843) (Fission yeast).